Here is a 646-residue protein sequence, read N- to C-terminus: Type I inositol polyphosphate 5-phosphatase 2 (646 aa).

Residues 59-74 are compositionally biased toward basic and acidic residues; it reads TDEDSHNGRRGSEADH. 3 disordered regions span residues 59 to 99, 185 to 207, and 329 to 369; these read TDED…GKSE, ESVYDQSPSCNNNALHRSHSAPS, and IDNR…IRNS. Residues 188 to 207 are compositionally biased toward polar residues; the sequence is YDQSPSCNNNALHRSHSAPS. The segment covering 341 to 350 has biased composition (basic and acidic residues); the sequence is EAAKIMHDDS. 2 catalytic regions span residues 495–510 and 575–590; these read DQVFWFGDLNYRLNMS and KKRAPAWCDRILWLGK.

The protein belongs to the inositol polyphosphate 5-phosphatase family. Expressed ubiquitously.

It carries out the reaction 1D-myo-inositol 1,4,5-trisphosphate + H2O = 1D-myo-inositol 1,4-bisphosphate + phosphate. It catalyses the reaction 1D-myo-inositol 1,3,4,5-tetrakisphosphate + H2O = 1D-myo-inositol 1,3,4-trisphosphate + phosphate. In terms of biological role, has phosphatase activity toward Ins(1,4,5)P3 and Ins(1,3,4,5)P4. Seems to be involved in the abscisic acid (ABA) signaling pathway. Could also be able to hydrolyze PtdIns(4,5)P2 and PtdIns(3,4,5)P3. This Arabidopsis thaliana (Mouse-ear cress) protein is Type I inositol polyphosphate 5-phosphatase 2.